The following is a 959-amino-acid chain: Probable LRR receptor-like serine/threonine-protein kinase At5g37450 (959 aa).

An N-terminal signal peptide occupies residues Met1–Ala24. Residues Gln25–Gly565 lie on the Extracellular side of the membrane. N-linked (GlcNAc...) asparagine glycans are attached at residues Asn62, Asn88, Asn102, and Asn123. LRR repeat units follow at residues Val79–Leu100, Ser101–Leu124, Thr125–Leu148, Ser149–Leu172, Lys173–Asn198, Leu200–Met220, Pro221–Ser244, Pro246–Ser268, and Leu269–Ala292. Residue Asn182 is glycosylated (N-linked (GlcNAc...) asparagine). Asn293, Asn311, Asn327, Asn358, Asn369, and Asn510 each carry an N-linked (GlcNAc...) asparagine glycan. LRR repeat units lie at residues Ile294–Gly314, Leu315–Asn338, and Leu341–Pro366. A helical transmembrane segment spans residues Ile566–Ile586. The Cytoplasmic portion of the chain corresponds to Lys587–Arg959. Positions Phe631–Ile906 constitute a Protein kinase domain. ATP contacts are provided by residues Ile637–Val645 and Lys659. Asp755 acts as the Proton acceptor in catalysis.

The protein belongs to the protein kinase superfamily. Ser/Thr protein kinase family.

Its subcellular location is the membrane. The enzyme catalyses L-seryl-[protein] + ATP = O-phospho-L-seryl-[protein] + ADP + H(+). The catalysed reaction is L-threonyl-[protein] + ATP = O-phospho-L-threonyl-[protein] + ADP + H(+). This Arabidopsis thaliana (Mouse-ear cress) protein is Probable LRR receptor-like serine/threonine-protein kinase At5g37450.